A 221-amino-acid chain; its full sequence is Ribonuclease T (221 aa).

Residues 20-194 (VVIDVETAGF…YDTERTAELF (175 aa)) enclose the Exonuclease domain. Mg(2+) contacts are provided by aspartate 23, glutamate 25, histidine 181, and aspartate 186. The active-site Proton donor/acceptor is the histidine 181.

The protein belongs to the RNase T family. In terms of assembly, homodimer. Requires Mg(2+) as cofactor.

Its function is as follows. Trims short 3' overhangs of a variety of RNA species, leaving a one or two nucleotide 3' overhang. Responsible for the end-turnover of tRNA: specifically removes the terminal AMP residue from uncharged tRNA (tRNA-C-C-A). Also appears to be involved in tRNA biosynthesis. This Shewanella frigidimarina (strain NCIMB 400) protein is Ribonuclease T.